A 218-amino-acid polypeptide reads, in one-letter code: Adenylate kinase (218 aa).

10–15 contacts ATP; that stretch reads GAGKGT. The interval 30-59 is NMP; that stretch reads STGDMLRAAVKAGTPLGLQAKAVMDAGQLV. Residues T31, R36, 57–59, 85–88, and Q92 each bind AMP; these read QLV and GFPR. Positions 122–159 are LID; the sequence is GRRSHPASGRTYHVKFNPPKVEGKDDVTGEPLVQREDD. ATP is bound by residues R123 and 132–133; that span reads TY. Residues 127–150 form a disordered region; that stretch reads PASGRTYHVKFNPPKVEGKDDVTG. Positions 156 and 167 each coordinate AMP. G203 contacts ATP.

It belongs to the adenylate kinase family. As to quaternary structure, monomer.

Its subcellular location is the cytoplasm. It catalyses the reaction AMP + ATP = 2 ADP. The protein operates within purine metabolism; AMP biosynthesis via salvage pathway; AMP from ADP: step 1/1. Catalyzes the reversible transfer of the terminal phosphate group between ATP and AMP. Plays an important role in cellular energy homeostasis and in adenine nucleotide metabolism. This chain is Adenylate kinase, found in Acidovorax ebreus (strain TPSY) (Diaphorobacter sp. (strain TPSY)).